We begin with the raw amino-acid sequence, 448 residues long: Nicotinate phosphoribosyltransferase pncB1 (448 aa).

The tract at residues Met1–Gly21 is disordered. Phosphohistidine is present on His212. The segment at Arg353 to Ala372 is disordered.

The protein belongs to the NAPRTase family. Transiently phosphorylated on a His residue during the reaction cycle. Phosphorylation strongly increases the affinity for substrates and increases the rate of nicotinate D-ribonucleotide production. Dephosphorylation regenerates the low-affinity form of the enzyme, leading to product release.

It catalyses the reaction nicotinate + 5-phospho-alpha-D-ribose 1-diphosphate + ATP + H2O = nicotinate beta-D-ribonucleotide + ADP + phosphate + diphosphate. It participates in cofactor biosynthesis; NAD(+) biosynthesis; nicotinate D-ribonucleotide from nicotinate: step 1/1. In terms of biological role, involved in the Preiss-Handler pathway, which is a recycling route that permits the salvage of free nicotinamide (NM) and nicotinic acid (Na) involved in the NAD biosynthesis. Catalyzes the synthesis of beta-nicotinate D-ribonucleotide from nicotinate and 5-phospho-D-ribose 1-phosphate at the expense of ATP. It is not able to use nicotinamide. PncB1 contributes to basal NAD level. The protein is Nicotinate phosphoribosyltransferase pncB1 (pncB1) of Mycobacterium tuberculosis (strain CDC 1551 / Oshkosh).